Reading from the N-terminus, the 228-residue chain is Glutamate transport system permease protein GluC (228 aa).

Transmembrane regions (helical) follow at residues 16-36 (FWVT…FGTI), 64-84 (LTLV…LTLA), 100-120 (AVLG…RSGI), 145-165 (IIFP…LIAL), and 195-215 (LFVV…PMGL). An ABC transmembrane type-1 domain is found at 16 to 217 (FWVTIKLTIY…ILTLPMGLGL (202 aa)).

This sequence belongs to the binding-protein-dependent transport system permease family. HisMQ subfamily. The complex is composed of two ATP-binding proteins (GluA), two transmembrane proteins (GluC and GluD) and a solute-binding protein (GluB).

It is found in the cell membrane. Its function is as follows. Part of the ABC transporter complex GluABCD involved in glutamate uptake. Probably responsible for the translocation of the substrate across the membrane. This is Glutamate transport system permease protein GluC from Corynebacterium glutamicum (strain ATCC 13032 / DSM 20300 / JCM 1318 / BCRC 11384 / CCUG 27702 / LMG 3730 / NBRC 12168 / NCIMB 10025 / NRRL B-2784 / 534).